Here is a 172-residue protein sequence, read N- to C-terminus: Small ribosomal subunit protein uS5 (172 aa).

One can recognise an S5 DRBM domain in the interval 16-79 (LKEKLVHINR…EDGKKNVVKV (64 aa)).

It belongs to the universal ribosomal protein uS5 family. Part of the 30S ribosomal subunit. Contacts proteins S4 and S8.

With S4 and S12 plays an important role in translational accuracy. In terms of biological role, located at the back of the 30S subunit body where it stabilizes the conformation of the head with respect to the body. This Prosthecochloris aestuarii (strain DSM 271 / SK 413) protein is Small ribosomal subunit protein uS5.